The following is a 320-amino-acid chain: o-succinylbenzoate synthase (320 aa).

Catalysis depends on Lys133, which acts as the Proton donor. Asp161, Glu190, and Asp213 together coordinate Mg(2+). Lys235 functions as the Proton acceptor in the catalytic mechanism.

This sequence belongs to the mandelate racemase/muconate lactonizing enzyme family. MenC type 1 subfamily. The cofactor is a divalent metal cation.

The enzyme catalyses (1R,6R)-6-hydroxy-2-succinyl-cyclohexa-2,4-diene-1-carboxylate = 2-succinylbenzoate + H2O. Its pathway is quinol/quinone metabolism; 1,4-dihydroxy-2-naphthoate biosynthesis; 1,4-dihydroxy-2-naphthoate from chorismate: step 4/7. The protein operates within quinol/quinone metabolism; menaquinone biosynthesis. Its function is as follows. Converts 2-succinyl-6-hydroxy-2,4-cyclohexadiene-1-carboxylate (SHCHC) to 2-succinylbenzoate (OSB). In Escherichia coli (strain K12 / MC4100 / BW2952), this protein is o-succinylbenzoate synthase.